Consider the following 111-residue polypeptide: Large ribosomal subunit protein uL23 (111 aa).

Belongs to the universal ribosomal protein uL23 family. As to quaternary structure, part of the 50S ribosomal subunit. Contacts protein L29, and trigger factor when it is bound to the ribosome.

Its function is as follows. One of the early assembly proteins it binds 23S rRNA. One of the proteins that surrounds the polypeptide exit tunnel on the outside of the ribosome. Forms the main docking site for trigger factor binding to the ribosome. The polypeptide is Large ribosomal subunit protein uL23 (Chlamydia caviae (strain ATCC VR-813 / DSM 19441 / 03DC25 / GPIC) (Chlamydophila caviae)).